The chain runs to 101 residues: Small ribosomal subunit protein uS14 (101 aa).

The segment at 49–70 is disordered; sequence QSLPRDSSPSRQRNRCNQTGRP. Polar residues predominate over residues 52-68; that stretch reads PRDSSPSRQRNRCNQTG.

Belongs to the universal ribosomal protein uS14 family. Part of the 30S ribosomal subunit. Contacts proteins S3 and S10.

Binds 16S rRNA, required for the assembly of 30S particles and may also be responsible for determining the conformation of the 16S rRNA at the A site. In Yersinia pseudotuberculosis serotype O:1b (strain IP 31758), this protein is Small ribosomal subunit protein uS14.